Consider the following 484-residue polypeptide: Replication-associated protein (484 aa).

The Nuclear localization signal motif lies at 146 to 153 (IRKYHQSV).

Its subcellular location is the host nucleus. Plays an essential for the replication of viral DNA. Presumably cleaves viral genomic dsRNA replicative form to initiate rolling circle replication. The sequence is that of Replication-associated protein from Chaetoceros (Chaetoceros sp. DNA virus 7).